We begin with the raw amino-acid sequence, 210 residues long: Putative RING-H2 finger protein ATL50 (210 aa).

A helical membrane pass occupies residues isoleucine 35–leucine 55. Residues cysteine 122–arginine 164 form an RING-type; atypical zinc finger. The interval serine 187–lysine 210 is disordered.

This sequence belongs to the RING-type zinc finger family. ATL subfamily.

It is found in the membrane. The catalysed reaction is S-ubiquitinyl-[E2 ubiquitin-conjugating enzyme]-L-cysteine + [acceptor protein]-L-lysine = [E2 ubiquitin-conjugating enzyme]-L-cysteine + N(6)-ubiquitinyl-[acceptor protein]-L-lysine.. It functions in the pathway protein modification; protein ubiquitination. This chain is Putative RING-H2 finger protein ATL50 (ATL50), found in Arabidopsis thaliana (Mouse-ear cress).